The following is an 83-amino-acid chain: SPbeta prophage-derived uncharacterized protein YopE (83 aa).

2 helical membrane-spanning segments follow: residues A5–V25 and V60–F80.

Its subcellular location is the cell membrane. The chain is SPbeta prophage-derived uncharacterized protein YopE (yopE) from Bacillus subtilis (strain 168).